Here is a 336-residue protein sequence, read N- to C-terminus: Neuropeptides B/W receptor type 2 (336 aa).

Residues 1-25 form a disordered region; that stretch reads MMEATGLEGLESTSSPCPGSTGTGL. Residues 1-45 are Extracellular-facing; it reads MMEATGLEGLESTSSPCPGSTGTGLSWDNGTRHNATFPEPLPALY. A compositionally biased stretch (low complexity) spans 12-25; sequence STSSPCPGSTGTGL. 2 N-linked (GlcNAc...) asparagine glycosylation sites follow: asparagine 29 and asparagine 34. A helical transmembrane segment spans residues 46-68; that stretch reads VLLPVVYSVICAVGLVGNAAVIC. Residues 69–80 lie on the Cytoplasmic side of the membrane; sequence VILRAPKMKTVT. The helical transmembrane segment at 81–103 threads the bilayer; sequence HVFILNLAIADGLFTLVLPTNIA. The Extracellular portion of the chain corresponds to 104-127; sequence EHLLQRWPFGEVLCKLVLAIDHCN. Cysteine 117 and cysteine 197 are joined by a disulfide. Residues 128–146 form a helical membrane-spanning segment; it reads IFSSVYFLAAMSIDRYLVV. At 147 to 165 the chain is on the cytoplasmic side; that stretch reads LATARSRRMPRRTVHRAKV. A helical transmembrane segment spans residues 166 to 188; it reads ASLCVWLGVTVAVLPFLTFAGVY. Residues 189–213 lie on the Extracellular side of the membrane; that stretch reads NNELQVTSCGLSFPRPERAWFQASR. The helical transmembrane segment at 214 to 236 threads the bilayer; it reads IYTLVLGFVVPMCTLCVLYADLL. Topologically, residues 237-256 are cytoplasmic; the sequence is RRLRALRLHSGAKALGKAKR. The helical transmembrane segment at 257–279 threads the bilayer; it reads KVSLLVLAVLAVGLLCWTPFHLA. Residues 280–293 lie on the Extracellular side of the membrane; it reads SIVALTTDLPQTPL. The helical transmembrane segment at 294–316 threads the bilayer; the sequence is VIIVSYVVTSLSYTSSCLNPFLY. Residues 317-336 are Cytoplasmic-facing; it reads AFLDHSFRKSLRTACRCQGA.

It belongs to the G-protein coupled receptor 1 family.

It localises to the cell membrane. Its function is as follows. Interacts specifically with a number of opioid ligands. Receptor for neuropeptides B and W, which may be involved in neuroendocrine system regulation, food intake and the organization of other signals. This Bos taurus (Bovine) protein is Neuropeptides B/W receptor type 2 (NPBWR2).